Consider the following 314-residue polypeptide: Aspartate carbamoyltransferase catalytic subunit (314 aa).

Carbamoyl phosphate contacts are provided by Arg-63 and Thr-64. Lys-91 provides a ligand contact to L-aspartate. Residues Arg-113, His-143, and Gln-146 each coordinate carbamoyl phosphate. Arg-176 and Arg-228 together coordinate L-aspartate. Carbamoyl phosphate is bound by residues Ala-269 and Pro-270.

It belongs to the aspartate/ornithine carbamoyltransferase superfamily. ATCase family. As to quaternary structure, heterododecamer (2C3:3R2) of six catalytic PyrB chains organized as two trimers (C3), and six regulatory PyrI chains organized as three dimers (R2).

The enzyme catalyses carbamoyl phosphate + L-aspartate = N-carbamoyl-L-aspartate + phosphate + H(+). It functions in the pathway pyrimidine metabolism; UMP biosynthesis via de novo pathway; (S)-dihydroorotate from bicarbonate: step 2/3. Functionally, catalyzes the condensation of carbamoyl phosphate and aspartate to form carbamoyl aspartate and inorganic phosphate, the committed step in the de novo pyrimidine nucleotide biosynthesis pathway. This chain is Aspartate carbamoyltransferase catalytic subunit, found in Cutibacterium acnes (strain DSM 16379 / KPA171202) (Propionibacterium acnes).